A 278-amino-acid polypeptide reads, in one-letter code: Probable endonuclease 4 (278 aa).

The Zn(2+) site is built by histidine 69, histidine 109, glutamate 145, aspartate 179, histidine 182, histidine 216, aspartate 229, histidine 231, and glutamate 261.

It belongs to the AP endonuclease 2 family. Zn(2+) serves as cofactor.

It carries out the reaction Endonucleolytic cleavage to 5'-phosphooligonucleotide end-products.. Functionally, endonuclease IV plays a role in DNA repair. It cleaves phosphodiester bonds at apurinic or apyrimidinic (AP) sites, generating a 3'-hydroxyl group and a 5'-terminal sugar phosphate. In Buchnera aphidicola subsp. Baizongia pistaciae (strain Bp), this protein is Probable endonuclease 4.